Reading from the N-terminus, the 487-residue chain is Alpha-1,4-L-rhamnosidase (487 aa).

The N-terminal stretch at 1–30 is a signal peptide; that stretch reads MKNKKRLCHILKYIITCFLFGVIFIIPIQA. Glutamate 199 (proton donor) is an active-site residue.

Belongs to the glycosyl hydrolase 39 family.

The protein localises to the periplasm. Alpha-rhamnosidase involved in ulvan degradation. Ulvan is the main polysaccharide component of the Ulvales (green seaweed) cell wall. It is composed of disaccharide building blocks comprising 3-sulfated rhamnose (Rha3S) linked to D-glucuronic acid (GlcA), L-iduronic acid (IduA), or D-xylose (Xyl). Endo-acting alpha-1,4-L-rhamnosidase cleaves rhamnose sections interspersed between xylose residues within the polymer, degrading larger oligomers with consecutive Xyl-Rha3S units that are resistant to the ulvan lyases and producing dimers Xyl-Rha3S and Xyl2S-Rha3S as the smallest products. The protein is Alpha-1,4-L-rhamnosidase of Formosa agariphila (strain DSM 15362 / KCTC 12365 / LMG 23005 / KMM 3901 / M-2Alg 35-1).